The primary structure comprises 124 residues: uncharacterized protein (124 aa).

The tract at residues 1 to 28 (MGTSLRSQSFREPRPSYGRLHESQGRSL) is disordered. Residues 9 to 28 (SFREPRPSYGRLHESQGRSL) show a composition bias toward basic and acidic residues.

This is an uncharacterized protein from Mus musculus (Mouse).